We begin with the raw amino-acid sequence, 1306 residues long: MTMYLWLKLLAFGFAFLDTEVFVTGQSPTPSPTGLTTAKMPSVPLSSDPLPTHTTAFSPASTFERENDFSETTTSLSPDNTSTQVSPDSLDNASAFNTTGVSSVQTPHLPTHADSQTPSAGTDTQTFSGSAANAKLNPTPGSNAISDVPGERSTASTFPTDPVSPLTTTLSLAHHSSAALPARTSNTTITANTSDAYLNASETTTLSPSGSAVISTTTIATTPSKPTCDEKYANITVDYLYNKETKLFTAKLNVNENVECGNNTCTNNEVHNLTECKNASVSISHNSCTAPDKTLILDVPPGVEKFQLHDCTQVEKADTTICLKWKNIETFTCDTQNITYRFQCGNMIFDNKEIKLENLEPEHEYKCDSEILYNNHKFTNASKIIKTDFGSPGEPQIIFCRSEAAHQGVITWNPPQRSFHNFTLCYIKETEKDCLNLDKNLIKYDLQNLKPYTKYVLSLHAYIIAKVQRNGSAAMCHFTTKSAPPSQVWNMTVSMTSDNSMHVKCRPPRDRNGPHERYHLEVEAGNTLVRNESHKNCDFRVKDLQYSTDYTFKAYFHNGDYPGEPFILHHSTSYNSKALIAFLAFLIIVTSIALLVVLYKIYDLHKKRSCNLDEQQELVERDDEKQLMNVEPIHADILLETYKRKIADEGRLFLAEFQSIPRVFSKFPIKEARKPFNQNKNRYVDILPYDYNRVELSEINGDAGSNYINASYIDGFKEPRKYIAAQGPRDETVDDFWRMIWEQKATVIVMVTRCEEGNRNKCAEYWPSMEEGTRAFGDVVVKINQHKRCPDYIIQKLNIVNKKEKATGREVTHIQFTSWPDHGVPEDPHLLLKLRRRVNAFSNFFSGPIVVHCSAGVGRTGTYIGIDAMLEGLEAENKVDVYGYVVKLRRQRCLMVQVEAQYILIHQALVEYNQFGETEVNLSELHPYLHNMKKRDPPSEPSPLEAEFQRLPSYRSWRTQHIGNQEENKSKNRNSNVIPYDYNRVPLKHELEMSKESEHDSDESSDDDSDSEEPSKYINASFIMSYWKPEVMIAAQGPLKETIGDFWQMIFQRKVKVIVMLTELKHGDQEICAQYWGEGKQTYGDIEVDLKDTDKSSTYTLRVFELRHSKRKDSRTVYQYQYTNWSVEQLPAEPKELISMIQVVKQKLPQKNSSEGNKHHKSTPLLIHCRDGSQQTGIFCALLNLLESAETEEVVDIFQVVKALRKARPGMVSTFEQYQFLYDVIASTYPAQNGQVKKNNHQEDKIEFDNEVDKVKQDANCVNPLGAPEKLPEAKEQAEGSEPTSGTEGPEHSVNGPASPALNQGS.

The first 25 residues, 1-25 (MTMYLWLKLLAFGFAFLDTEVFVTG), serve as a signal peptide directing secretion. Residues 26–577 (QSPTPSPTGL…LHHSTSYNSK (552 aa)) are Extracellular-facing. The segment at 28–163 (PTPSPTGLTT…TASTFPTDPV (136 aa)) is disordered. Polar residues-rich tracts occupy residues 52–61 (THTTAFSPAS) and 70–131 (SETT…SGSA). Residues Asn80, Asn92, Asn97, Asn186, Asn192, Asn199, Asn234, Asn262, Asn272, and Asn278 are each glycosylated (N-linked (GlcNAc...) asparagine). N-linked (GlcNAc...) asparagine; atypical glycosylation is present at Asn286. Residues Asn337, Asn380, Asn421, Asn470, Asn490, and Asn531 are each glycosylated (N-linked (GlcNAc...) asparagine). Fibronectin type-III domains follow at residues 391–483 (SPGE…TKSA) and 484–576 (PPSQ…SYNS). A helical membrane pass occupies residues 578 to 598 (ALIAFLAFLIIVTSIALLVVL). Residues 599–1306 (YKIYDLHKKR…PASPALNQGS (708 aa)) lie on the Cytoplasmic side of the membrane. Tyrosine-protein phosphatase domains are found at residues 653–912 (FLAE…LVEY) and 944–1228 (LEAE…IAST). Tyr683 carries the post-translational modification Phosphotyrosine. Substrate-binding positions include Asp821, 853–859 (CSAGVGR), and Gln897. Cys853 (phosphocysteine intermediate) is an active-site residue. Ser975, Ser994, Ser997, Ser1001, Ser1004, Ser1005, and Ser1009 each carry phosphoserine. Residues 993 to 1014 (MSKESEHDSDESSDDDSDSEEP) are disordered. A compositionally biased stretch (acidic residues) spans 999–1012 (HDSDESSDDDSDSE). Catalysis depends on Cys1169, which acts as the Phosphocysteine intermediate. A disordered region spans residues 1261-1306 (CVNPLGAPEKLPEAKEQAEGSEPTSGTEGPEHSVNGPASPALNQGS). Ser1299 carries the post-translational modification Phosphoserine.

Belongs to the protein-tyrosine phosphatase family. Receptor class 1/6 subfamily. Binds GANAB and PRKCSH. Interacts with SKAP1. Interacts with DPP4; the interaction is enhanced in an interleukin-12-dependent manner in activated lymphocytes. Interacts with CD53; this interaction stabilizes PTPRC on the membrane and is required for optimal phosphatase activity. In terms of assembly, interacts with CLEC10A. As to quaternary structure, does not interact with CLEC10A. (Microbial infection) Interacts with human cytomegalovirus protein UL11; the interaction is required for binding of UL11 to T-cells. Heavily N- and O-glycosylated. Isoform 1: Detected in thymocytes. Isoform 2: Detected in thymocytes. Isoform 3: Detected in thymocytes. Isoform 4: Not detected in thymocytes. Isoform 5: Detected in thymocytes. Isoform 6: Not detected in thymocytes. Isoform 7: Detected in thymocytes. Isoform 8: Not detected in thymocytes.

Its subcellular location is the cell membrane. The protein resides in the membrane raft. The protein localises to the synapse. The catalysed reaction is O-phospho-L-tyrosyl-[protein] + H2O = L-tyrosyl-[protein] + phosphate. Functionally, protein tyrosine-protein phosphatase required for T-cell activation through the antigen receptor. Acts as a positive regulator of T-cell coactivation upon binding to DPP4. The first PTPase domain has enzymatic activity, while the second one seems to affect the substrate specificity of the first one. Upon T-cell activation, recruits and dephosphorylates SKAP1 and FYN. Dephosphorylates LYN, and thereby modulates LYN activity. Interacts with CLEC10A at antigen presenting cell-T cell contact; CLEC10A on immature dendritic cells recognizes Tn antigen-carrying PTPRC/CD45 receptor on effector T cells and modulates T cell activation threshold to limit autoreactivity. In terms of biological role, (Microbial infection) Acts as a receptor for human cytomegalovirus protein UL11 and mediates binding of UL11 to T-cells, leading to reduced induction of tyrosine phosphorylation of multiple signaling proteins upon T-cell receptor stimulation and impaired T-cell proliferation. This Homo sapiens (Human) protein is Receptor-type tyrosine-protein phosphatase C.